We begin with the raw amino-acid sequence, 462 residues long: uncharacterized protein (462 aa).

The interval 405–462 (QPIGNNKSSPMKREFTAMEEDKTETGDIFKLLSQQKPAKGAKSKSKKYKKTEEDLSAV) is disordered. Over residues 415 to 431 (MKREFTAMEEDKTETGD) the composition is skewed to basic and acidic residues. The segment covering 443–453 (KGAKSKSKKYK) has biased composition (basic residues).

This is an uncharacterized protein from Magallana gigas (Pacific oyster).